A 287-amino-acid polypeptide reads, in one-letter code: Festuclavine synthase II (287 aa).

The protein belongs to the fgaFS/easG family.

It carries out the reaction festuclavine + NAD(+) = 6,8-dimethyl-6,7-didehydroergoline + NADH + H(+). It functions in the pathway alkaloid biosynthesis; ergot alkaloid biosynthesis. In terms of biological role, festuclavine synthase; part of the gene cluster that mediates the biosynthesis of isofumigaclavines, fungal ergot alkaloids. The tryptophan dimethylallyltransferase ifgA catalyzes the first step of ergot alkaloid biosynthesis by condensing dimethylallyl diphosphate (DMAP) and tryptophan to form 4-dimethylallyl-L-tryptophan. The second step is catalyzed by the methyltransferase ifgB that methylates 4-dimethylallyl-L-tryptophan in the presence of S-adenosyl-L-methionine, resulting in the formation of N-methyl-dimethylallyl-L-tryptophan. The catalase ifgD and the FAD-dependent oxidoreductase ifgC then transform N-methyl-dimethylallyl-L-tryptophan to chanoclavine-I which is further oxidized by ifgE in the presence of NAD(+), resulting in the formation of chanoclavine-I aldehyde. The chanoclavine-I aldehyde reductases ifgG and/or fgaOx3 reduce chanoclavine-I aldehyde to dihydrochanoclavine-I aldehyde that spontaneously dehydrates to form 6,8-dimethyl-6,7-didehydroergoline. The festuclavine dehydrogenases ifgF1 and/or ifgF2 then catalyze the reduction of 6,8-dimethyl-6,7-didehydroergoline to form festuclavine. Hydrolysis of festuclavine by a yet undetermined cytochrome P450 monooxygenase (called ifgH) then leads to the formation of isofumigaclavine B which is in turn acetylated by ifgI to isofumigaclavine A. Penicillium roqueforti has interestingly at least two sets of genes for the consumption of chanoclavine-I aldehyde on three different loci, the OYEs ifgG/fgaOx3 and the festuclavine synthase homologs ifgF1/ifgF2. The reason for the duplication of these genes is unclear, probably to ensure the conversion of chanoclavine-I aldehyde by differential gene expression under various environmental conditions. The protein is Festuclavine synthase II of Penicillium roqueforti (strain FM164).